The sequence spans 282 residues: MTHWPSPAKLNLFLYITGQRADGYHTLQTLFQFLDYGDTLHIEPRRDGEIHLLTPVNGVENEDNLIVRAARLLMKAASESGRLPAGSGADISIEKRLPMGGGLGGGSSNAATVLVALNHLWQCGLSIDELATLGLTLGADVPVFVRGHAAFAEGVGEILTPVNPPEKWYLVAHPGVSIPTPVIFKDPQLPRNTPKRSIDTLLKCEFSNDCEVIARKRFREVDAALSWLLEYAPSRLTGTGACVFAEFDTESCARQVLEQAPEWLNAFVAKGVNLSPLHRELL.

Lysine 9 is a catalytic residue. 98 to 108 (PMGGGLGGGSS) is an ATP binding site. Aspartate 140 is a catalytic residue.

Belongs to the GHMP kinase family. IspE subfamily. As to quaternary structure, homodimer.

The enzyme catalyses 4-CDP-2-C-methyl-D-erythritol + ATP = 4-CDP-2-C-methyl-D-erythritol 2-phosphate + ADP + H(+). It participates in isoprenoid biosynthesis; isopentenyl diphosphate biosynthesis via DXP pathway; isopentenyl diphosphate from 1-deoxy-D-xylulose 5-phosphate: step 3/6. Functionally, catalyzes the phosphorylation of the position 2 hydroxy group of 4-diphosphocytidyl-2C-methyl-D-erythritol. This is 4-diphosphocytidyl-2-C-methyl-D-erythritol kinase from Salmonella agona (strain SL483).